A 429-amino-acid polypeptide reads, in one-letter code: uncharacterized protein (429 aa).

This is an uncharacterized protein from Mycobacterium tuberculosis (strain CDC 1551 / Oshkosh).